The sequence spans 591 residues: Aspartate--tRNA ligase (591 aa).

Glu172 is an L-aspartate binding site. Positions Gln196–Lys199 are aspartate. Residue Arg218 participates in L-aspartate binding. ATP contacts are provided by residues Arg218–Glu220 and Gln227. Position 449 (His449) interacts with L-aspartate. Glu483 serves as a coordination point for ATP. Arg490 lines the L-aspartate pocket. Gly535–Arg538 provides a ligand contact to ATP.

This sequence belongs to the class-II aminoacyl-tRNA synthetase family. Type 1 subfamily. As to quaternary structure, homodimer.

The protein localises to the cytoplasm. The enzyme catalyses tRNA(Asp) + L-aspartate + ATP = L-aspartyl-tRNA(Asp) + AMP + diphosphate. Functionally, catalyzes the attachment of L-aspartate to tRNA(Asp) in a two-step reaction: L-aspartate is first activated by ATP to form Asp-AMP and then transferred to the acceptor end of tRNA(Asp). The chain is Aspartate--tRNA ligase from Actinobacillus pleuropneumoniae serotype 7 (strain AP76).